The primary structure comprises 500 residues: SAAATSAVPAPNQQPEVFCNQIFINNEWHDAVSKKTFPTVNPSTGEVICQVAEGSKEDVDKAVKAARAAFQLGSPWRRMDASDRGRLLNRLADLIERDRTYLAALETLDNGKPYVISYLVDLDMVLKCLRYYAGWADKYHGKTIPIDGDFFSYTRHEPVGVCGQIIPWNFPLLMQAWKLGPALATGNVVVMKVAEQTPLTALYVANLIKEAGFPPGVVNIVPGFGPTAGAAIASHEDVDKVAFTGSTEVGHLIQVAAGSSNLKRVTLELGGKSPNIIMSDADMDWAVEQAHFALFFNQGQCCCAGSRTFVQEDVYDEFVERSVARAKSRVVGNPFDSRTEQGPQVDETQFKKILGYIKSGQQEGAKLLCGGGAAADRGYFIQPTVFGDVKDGMTIAKEEIFGPVMQILKFKTIEEVVGRANNSKYGLAAAVFTKDLDKANYLSQALQAGTVWINCYDVFGAQSPFGGYKMSGSGRELGEYGLQAYTEVKTVTIKVPQKNS.

N6-acetyllysine is present on residues K35, K56, K61, and K142. G245–G250 provides a ligand contact to NAD(+). E268 functions as the Proton acceptor in the catalytic mechanism. Residue C302 is the Nucleophile of the active site. An N6-acetyllysine mark is found at K351, K358, K366, K390, K409, K411, K424, and K434.

Belongs to the aldehyde dehydrogenase family. As to quaternary structure, homotetramer. In response to mitochondrial stress, the precursor protein is ubiquitinated by the SIFI complex in the cytoplasm before mitochondrial import, leading to its degradation. Within the SIFI complex, UBR4 initiates ubiquitin chain that are further elongated or branched by KCMF1.

It localises to the mitochondrion matrix. The catalysed reaction is an aldehyde + NAD(+) + H2O = a carboxylate + NADH + 2 H(+). It functions in the pathway alcohol metabolism; ethanol degradation; acetate from ethanol: step 2/2. Its function is as follows. Required for clearance of cellular formaldehyde, a cytotoxic and carcinogenic metabolite that induces DNA damage. This Mesocricetus auratus (Golden hamster) protein is Aldehyde dehydrogenase, mitochondrial (ALDH2).